The sequence spans 151 residues: S-protein homolog 27 (151 aa).

2 N-linked (GlcNAc...) asparagine glycosylation sites follow: N91 and N123.

It belongs to the plant self-incompatibility (S1) protein family.

The protein localises to the secreted. The polypeptide is S-protein homolog 27 (Arabidopsis thaliana (Mouse-ear cress)).